The sequence spans 131 residues: Small ribosomal subunit protein uS8 (131 aa).

The protein belongs to the universal ribosomal protein uS8 family. In terms of assembly, part of the 30S ribosomal subunit. Contacts proteins S5 and S12.

Its function is as follows. One of the primary rRNA binding proteins, it binds directly to 16S rRNA central domain where it helps coordinate assembly of the platform of the 30S subunit. The sequence is that of Small ribosomal subunit protein uS8 from Acholeplasma laidlawii (strain PG-8A).